Here is a 174-residue protein sequence, read N- to C-terminus: Dual-action ribosomal maturation protein DarP (174 aa).

It belongs to the DarP family.

It localises to the cytoplasm. Functionally, member of a network of 50S ribosomal subunit biogenesis factors which assembles along the 30S-50S interface, preventing incorrect 23S rRNA structures from forming. Promotes peptidyl transferase center (PTC) maturation. In Vibrio atlanticus (strain LGP32) (Vibrio splendidus (strain Mel32)), this protein is Dual-action ribosomal maturation protein DarP.